A 591-amino-acid polypeptide reads, in one-letter code: Dolichyl-phosphooligosaccharide-protein glycotransferase 1 (591 aa).

The Cytoplasmic segment spans residues Met-1–Val-5. The chain crosses the membrane as a helical span at residues Leu-6–Phe-26. Topologically, residues Asp-27–Lys-67 are extracellular. Positions Gly-34 to Asp-36 match the DXD motif 1 motif. Asp-36 lines the Mn(2+) pocket. The helical transmembrane segment at Ile-68–His-88 threads the bilayer. Over Ser-89–Glu-91 the chain is Cytoplasmic. A helical membrane pass occupies residues Ile-92 to Thr-112. Residues Ala-113–Thr-121 are Extracellular-facing. Residues Phe-122–Leu-142 traverse the membrane as a helical segment. The Cytoplasmic segment spans residues Gly-143–His-147. Asp-146 contributes to the Mn(2+) binding site. Positions Asp-146–His-148 match the DXD motif 2 motif. A glycophospholipid is bound at residue His-147. His-148 contributes to the Mn(2+) binding site. Residues His-148 to Trp-168 form a helical membrane-spanning segment. Residue Lys-169 is a topological domain, extracellular. Residues Ile-170–Gly-190 traverse the membrane as a helical segment. Residues Ala-191–Ser-219 are Cytoplasmic-facing. The chain crosses the membrane as a helical span at residues Phe-220–Gly-240. Topologically, residues Ser-241–Asn-252 are extracellular. The chain crosses the membrane as a helical span at residues Ala-253–Leu-273. The Cytoplasmic portion of the chain corresponds to Pro-274 to His-275. Residues Phe-276–Ile-296 traverse the membrane as a helical segment. Positions Thr-295 to Glu-298 match the TIXE motif motif. Topologically, residues Ser-297–Gln-303 are extracellular. A helical membrane pass occupies residues Ile-304–Leu-324. The Cytoplasmic segment spans residues Phe-325 to Arg-327. The helical transmembrane segment at Asn-328–Met-344 threads the bilayer. Residues Gln-345–Arg-347 lie on the Extracellular side of the membrane. Residue Arg-347 coordinates a glycophospholipid. The helical transmembrane segment at Phe-348–Leu-368 threads the bilayer. The Cytoplasmic portion of the chain corresponds to Glu-369–Ala-408. The chain crosses the membrane as a helical span at residues Val-409–Phe-429. The Extracellular portion of the chain corresponds to Asp-430–Ser-591. The interacts with target acceptor peptide in protein substrate stretch occupies residues Trp-465–Asp-467. The WWDYG motif signature appears at Trp-465 to Gly-469. The DKi motif motif lies at Glu-521–Ile-535.

Belongs to the STT3 family. Requires Mn(2+) as cofactor. Mg(2+) is required as a cofactor. The cofactor is Zn(2+).

It is found in the cell membrane. The catalysed reaction is an archaeal dolichyl phosphooligosaccharide + [protein]-L-asparagine = an archaeal dolichyl phosphate + a glycoprotein with the oligosaccharide chain attached by N-beta-D-glycosyl linkage to a protein L-asparagine.. It functions in the pathway protein modification; protein glycosylation. Functionally, oligosaccharyl transferase (OST) that catalyzes the initial transfer of a defined glycan (a GalNAc-linked heptasaccharide composed of 4 Hex, 3 dHex and a sulfate for A.fulgidus AglB-S) from the lipid carrier dolichol-monophosphate to an asparagine residue within an Asn-X-Ser/Thr consensus motif in nascent polypeptide chains, the first step in protein N-glycosylation. The polypeptide is Dolichyl-phosphooligosaccharide-protein glycotransferase 1 (aglB1) (Archaeoglobus fulgidus (strain ATCC 49558 / DSM 4304 / JCM 9628 / NBRC 100126 / VC-16)).